We begin with the raw amino-acid sequence, 241 residues long: 1-(5-phosphoribosyl)-5-[(5-phosphoribosylamino)methylideneamino] imidazole-4-carboxamide isomerase (241 aa).

Aspartate 10 acts as the Proton acceptor in catalysis. Aspartate 129 serves as the catalytic Proton donor.

This sequence belongs to the HisA/HisF family.

It localises to the cytoplasm. It catalyses the reaction 1-(5-phospho-beta-D-ribosyl)-5-[(5-phospho-beta-D-ribosylamino)methylideneamino]imidazole-4-carboxamide = 5-[(5-phospho-1-deoxy-D-ribulos-1-ylimino)methylamino]-1-(5-phospho-beta-D-ribosyl)imidazole-4-carboxamide. It participates in amino-acid biosynthesis; L-histidine biosynthesis; L-histidine from 5-phospho-alpha-D-ribose 1-diphosphate: step 4/9. The sequence is that of 1-(5-phosphoribosyl)-5-[(5-phosphoribosylamino)methylideneamino] imidazole-4-carboxamide isomerase from Salinispora arenicola (strain CNS-205).